A 497-amino-acid chain; its full sequence is Acetyl-coenzyme A carboxylase carboxyl transferase subunit beta, chloroplastic (497 aa).

A CoA carboxyltransferase N-terminal domain is found at 230–497 (LWVQCENCYG…FFPVNSNSIK (268 aa)). Residues Cys-234, Cys-237, Cys-253, and Cys-256 each contribute to the Zn(2+) site. Residues 234–256 (CENCYGLNYKKFFRSKFNICEQC) form a C4-type zinc finger.

The protein belongs to the AccD/PCCB family. In terms of assembly, acetyl-CoA carboxylase is a heterohexamer composed of biotin carboxyl carrier protein, biotin carboxylase and 2 subunits each of ACCase subunit alpha and ACCase plastid-coded subunit beta (accD). The cofactor is Zn(2+).

The protein localises to the plastid. The protein resides in the chloroplast stroma. It carries out the reaction N(6)-carboxybiotinyl-L-lysyl-[protein] + acetyl-CoA = N(6)-biotinyl-L-lysyl-[protein] + malonyl-CoA. The protein operates within lipid metabolism; malonyl-CoA biosynthesis; malonyl-CoA from acetyl-CoA: step 1/1. Component of the acetyl coenzyme A carboxylase (ACC) complex. Biotin carboxylase (BC) catalyzes the carboxylation of biotin on its carrier protein (BCCP) and then the CO(2) group is transferred by the transcarboxylase to acetyl-CoA to form malonyl-CoA. This chain is Acetyl-coenzyme A carboxylase carboxyl transferase subunit beta, chloroplastic, found in Nandina domestica (Heavenly bamboo).